A 313-amino-acid polypeptide reads, in one-letter code: Dihydroorotate dehydrogenase B (NAD(+)), catalytic subunit (313 aa).

FMN-binding positions include Ser-21 and Lys-45–Ala-46. Residues Lys-45 and Asn-69–Leu-73 contribute to the substrate site. 2 residues coordinate FMN: Asn-99 and Asn-127. Residue Asn-127 coordinates substrate. Cys-130 functions as the Nucleophile in the catalytic mechanism. FMN-binding residues include Lys-165 and Ile-191. Asn-192–Thr-193 is a substrate binding site. Residues Gly-217, Gly-243 to Gly-244, and Gly-265 to Thr-266 contribute to the FMN site.

The protein belongs to the dihydroorotate dehydrogenase family. Type 1 subfamily. In terms of assembly, heterotetramer of 2 PyrK and 2 PyrD type B subunits. FMN is required as a cofactor.

The protein localises to the cytoplasm. The enzyme catalyses (S)-dihydroorotate + NAD(+) = orotate + NADH + H(+). Its pathway is pyrimidine metabolism; UMP biosynthesis via de novo pathway; orotate from (S)-dihydroorotate (NAD(+) route): step 1/1. Functionally, catalyzes the conversion of dihydroorotate to orotate with NAD(+) as electron acceptor. This chain is Dihydroorotate dehydrogenase B (NAD(+)), catalytic subunit (pyrD), found in Geobacillus sp. (strain WCH70).